The sequence spans 154 residues: Protein X (154 aa).

A mitochondrial targeting sequence region spans residues 68 to 117; it reads PCALRFTSARRMETTVNAHQVLPKVLYKRTLGLSAMSTTDLEAYFKDCLF.

It belongs to the orthohepadnavirus protein X family. May form homodimer. May interact with host CEBPA, CFLAR, CREB1, DDB1, E4F1, HBXIP, HSPD1/HSP60, NFKBIA, POLR2E and SMAD4. Interacts with host SMC5-SMC6 complex and induces its degradation. Interacts with host TRPC4AP; leading to prevent ubiquitination of TRPC4AP. Interacts with host PLSCR1; this interaction promotes ubiquitination and degradation of HBx and impairs HBx-mediated cell proliferation. A fraction may be phosphorylated in insect cells and HepG2 cells, a human hepatoblastoma cell line. Phosphorylated in vitro by host protein kinase C or mitogen-activated protein kinase. N-acetylated in insect cells.

It localises to the host cytoplasm. Its subcellular location is the host nucleus. The protein resides in the host mitochondrion. Functionally, multifunctional protein that plays a role in silencing host antiviral defenses and promoting viral transcription. Does not seem to be essential for HBV infection. May be directly involved in development of cirrhosis and liver cancer (hepatocellular carcinoma). Most of cytosolic activities involve modulation of cytosolic calcium. The effect on apoptosis is controversial depending on the cell types in which the studies have been conducted. May induce apoptosis by localizing in mitochondria and causing loss of mitochondrial membrane potential. May also modulate apoptosis by binding host CFLAR, a key regulator of the death-inducing signaling complex (DISC). Promotes viral transcription by using the host E3 ubiquitin ligase DDB1 to target the SMC5-SMC6 complex to proteasomal degradation. This host complex would otherwise bind to viral episomal DNA, and prevents its transcription. Moderately stimulates transcription of many different viral and cellular transcription elements. Promoters and enhancers stimulated by HBx contain DNA binding sites for NF-kappa-B, AP-1, AP-2, c-EBP, ATF/CREB, or the calcium-activated factor NF-AT. The polypeptide is Protein X (Homo sapiens (Human)).